The chain runs to 393 residues: Lipid-A-disaccharide synthase (393 aa).

This sequence belongs to the LpxB family.

It catalyses the reaction a lipid X + a UDP-2-N,3-O-bis[(3R)-3-hydroxyacyl]-alpha-D-glucosamine = a lipid A disaccharide + UDP + H(+). The protein operates within bacterial outer membrane biogenesis; LPS lipid A biosynthesis. Condensation of UDP-2,3-diacylglucosamine and 2,3-diacylglucosamine-1-phosphate to form lipid A disaccharide, a precursor of lipid A, a phosphorylated glycolipid that anchors the lipopolysaccharide to the outer membrane of the cell. The protein is Lipid-A-disaccharide synthase of Bordetella bronchiseptica (strain ATCC BAA-588 / NCTC 13252 / RB50) (Alcaligenes bronchisepticus).